Here is a 544-residue protein sequence, read N- to C-terminus: MFS-type transporter prx5 (544 aa).

Positions 1–28 (MAVDTEKDSVQAGSPMETPGSPVDETTE) are disordered. The next 13 helical transmembrane spans lie at 36–56 (WIVS…IPVV), 90–110 (LDHL…VASA), 116–136 (VIAG…AAFA), 148–168 (IGVV…PVTA), 178–198 (AWNF…LLFL), 221–241 (GAFL…WAGV), 249–269 (VVAP…WESF), 290–310 (FTAP…SSIL), 330–350 (VILS…LTCF), 361–381 (LTGS…VTPT), 387–407 (IAFI…SIAI), 418–438 (GVSG…ATSI), and 505–525 (AIFV…AACL).

The protein belongs to the major facilitator superfamily.

It localises to the cell membrane. In terms of biological role, MFS-type transporter; part of the gene cluster that mediates the biosynthesis of PR-toxin, a bicyclic sesquiterpene belonging to the eremophilane class and acting as a mycotoxin. The chain is MFS-type transporter prx5 from Penicillium rubens (strain ATCC 28089 / DSM 1075 / NRRL 1951 / Wisconsin 54-1255) (Penicillium chrysogenum).